The following is a 96-amino-acid chain: Aspartyl/glutamyl-tRNA(Asn/Gln) amidotransferase subunit C (96 aa).

The protein belongs to the GatC family. Heterotrimer of A, B and C subunits.

It catalyses the reaction L-glutamyl-tRNA(Gln) + L-glutamine + ATP + H2O = L-glutaminyl-tRNA(Gln) + L-glutamate + ADP + phosphate + H(+). The enzyme catalyses L-aspartyl-tRNA(Asn) + L-glutamine + ATP + H2O = L-asparaginyl-tRNA(Asn) + L-glutamate + ADP + phosphate + 2 H(+). Allows the formation of correctly charged Asn-tRNA(Asn) or Gln-tRNA(Gln) through the transamidation of misacylated Asp-tRNA(Asn) or Glu-tRNA(Gln) in organisms which lack either or both of asparaginyl-tRNA or glutaminyl-tRNA synthetases. The reaction takes place in the presence of glutamine and ATP through an activated phospho-Asp-tRNA(Asn) or phospho-Glu-tRNA(Gln). The protein is Aspartyl/glutamyl-tRNA(Asn/Gln) amidotransferase subunit C of Bacillus velezensis (strain DSM 23117 / BGSC 10A6 / LMG 26770 / FZB42) (Bacillus amyloliquefaciens subsp. plantarum).